We begin with the raw amino-acid sequence, 204 residues long: MSNPIKIGIGGPVGAGKTQLIEKVVKRLAKKMSIGVITNDIYTKEDEKILVNTGVLPEDRIIGVETGGCPHTAIREDASMNFAAIDELLERNDDIELIFIESGGDNLAATFSPELVDFSIYIIDVAQGEKIPRKGGQGMIKSDFFIINKTDLAPYVGASLDQMAKDTEVFRGNHPFAFTNLKTDEGLEKVIEWIEHDVLLKGLT.

GTP is bound at residue 11 to 18 (GPVGAGKT).

It belongs to the SIMIBI class G3E GTPase family. UreG subfamily. As to quaternary structure, homodimer. UreD, UreF and UreG form a complex that acts as a GTP-hydrolysis-dependent molecular chaperone, activating the urease apoprotein by helping to assemble the nickel containing metallocenter of UreC. The UreE protein probably delivers the nickel.

It localises to the cytoplasm. Its function is as follows. Facilitates the functional incorporation of the urease nickel metallocenter. This process requires GTP hydrolysis, probably effectuated by UreG. The protein is Urease accessory protein UreG of Staphylococcus epidermidis (strain ATCC 35984 / DSM 28319 / BCRC 17069 / CCUG 31568 / BM 3577 / RP62A).